A 192-amino-acid polypeptide reads, in one-letter code: NADH:FMN oxidoreductase (192 aa).

Positions 1–20 (MSDKPNAVSSHTTPDVPEVA) are disordered. Residues 60–63 (TATS), 77–84 (NIAETSSS), A111, and R117 each bind FMN.

The protein belongs to the non-flavoprotein flavin reductase family.

Its subcellular location is the cytoplasm. It carries out the reaction FMNH2 + NAD(+) = FMN + NADH + 2 H(+). Its pathway is sulfur metabolism; dibenzothiophene degradation. Its function is as follows. An NADH:FMN oxidoreductase which supplies reduced FMN for the '4S' desulfurization pathway that removes covalently bound sulfur from dibenzothiophene (DBT) without breaking carbon-carbon bonds. Provides DszA and DszC (DBTO2-monooxygenase and DBT-monooxygenase respectively) with reduced flavin (FMN). The chain is NADH:FMN oxidoreductase from Rhodococcus erythropolis (Arthrobacter picolinophilus).